Reading from the N-terminus, the 210-residue chain is Probable septum site-determining protein MinC (210 aa).

Belongs to the MinC family. As to quaternary structure, interacts with MinD and FtsZ.

In terms of biological role, cell division inhibitor that blocks the formation of polar Z ring septums. Rapidly oscillates between the poles of the cell to destabilize FtsZ filaments that have formed before they mature into polar Z rings. Prevents FtsZ polymerization. This is Probable septum site-determining protein MinC from Thermotoga petrophila (strain ATCC BAA-488 / DSM 13995 / JCM 10881 / RKU-1).